The primary structure comprises 614 residues: Translation initiation factor IF-2 (614 aa).

Positions 115-283 (ARAPIVTIMG…ILLIAELNNY (169 aa)) constitute a tr-type G domain. Positions 124-131 (GHVDHGKT) are G1. Residue 124 to 131 (GHVDHGKT) coordinates GTP. A G2 region spans residues 149–153 (GITQH). Residues 170-173 (DTPG) are G3. GTP is bound by residues 170–174 (DTPGH) and 224–227 (NKMD). The tract at residues 224–227 (NKMD) is G4. Positions 260 to 262 (SAL) are G5.

The protein belongs to the TRAFAC class translation factor GTPase superfamily. Classic translation factor GTPase family. IF-2 subfamily.

The protein resides in the cytoplasm. In terms of biological role, one of the essential components for the initiation of protein synthesis. Protects formylmethionyl-tRNA from spontaneous hydrolysis and promotes its binding to the 30S ribosomal subunits. Also involved in the hydrolysis of GTP during the formation of the 70S ribosomal complex. The protein is Translation initiation factor IF-2 of Ureaplasma parvum serovar 3 (strain ATCC 27815 / 27 / NCTC 11736).